Consider the following 104-residue polypeptide: uncharacterized protein (104 aa).

Residues 77–98 traverse the membrane as a helical segment; sequence IAAVRANIIICACFFYLFCYCS.

The protein resides in the membrane. This is an uncharacterized protein from Saccharomyces cerevisiae (strain ATCC 204508 / S288c) (Baker's yeast).